We begin with the raw amino-acid sequence, 635 residues long: Biosynthetic arginine decarboxylase (635 aa).

N6-(pyridoxal phosphate)lysine is present on Lys100. 282 to 292 (VDIGGGLGVDY) provides a ligand contact to substrate.

Belongs to the Orn/Lys/Arg decarboxylase class-II family. SpeA subfamily. It depends on Mg(2+) as a cofactor. Pyridoxal 5'-phosphate serves as cofactor.

It catalyses the reaction L-arginine + H(+) = agmatine + CO2. It functions in the pathway amine and polyamine biosynthesis; agmatine biosynthesis; agmatine from L-arginine: step 1/1. In terms of biological role, catalyzes the biosynthesis of agmatine from arginine. This chain is Biosynthetic arginine decarboxylase, found in Geotalea daltonii (strain DSM 22248 / JCM 15807 / FRC-32) (Geobacter daltonii).